We begin with the raw amino-acid sequence, 169 residues long: Disulfide bond formation protein B 1 (169 aa).

Topologically, residues 1–14 are cytoplasmic; the sequence is MSEETIRLGRERRY. A helical membrane pass occupies residues 15–31; sequence LVLLGIICLALIGGALY. Over 32-49 the chain is Periplasmic; that stretch reads MQIVLGEAPCPLCILQRY. An intrachain disulfide couples cysteine 41 to cysteine 44. A helical transmembrane segment spans residues 50–64; that stretch reads ALLLIALFAFIGAAM. Topologically, residues 65 to 71 are cytoplasmic; the sequence is RTRRSIT. The helical transmembrane segment at 72-89 threads the bilayer; it reads VFEVLVVICAIAGAGVAG. At 90-144 the chain is on the periplasmic side; it reads HHVYTQFYPAVSCGIDVLQPIVDDLPLAKIFPLGFQVDGFCSTPYPPILGLSLAQ. Cysteine 102 and cysteine 130 are oxidised to a cystine. Residues 145 to 163 traverse the membrane as a helical segment; sequence WALVAFVLVVILVPLLTSR. The Cytoplasmic segment spans residues 164–169; sequence NRKALR.

The protein belongs to the DsbB family.

It is found in the cell inner membrane. In terms of biological role, required for disulfide bond formation in some periplasmic proteins. Acts by oxidizing the DsbA protein. This is Disulfide bond formation protein B 1 from Pseudomonas fluorescens (strain Pf0-1).